The sequence spans 239 residues: Ribonuclease PH (239 aa).

Phosphate contacts are provided by residues R86 and 124 to 126 (GTR).

It belongs to the RNase PH family. In terms of assembly, homohexameric ring arranged as a trimer of dimers.

The catalysed reaction is tRNA(n+1) + phosphate = tRNA(n) + a ribonucleoside 5'-diphosphate. Its function is as follows. Phosphorolytic 3'-5' exoribonuclease that plays an important role in tRNA 3'-end maturation. Removes nucleotide residues following the 3'-CCA terminus of tRNAs; can also add nucleotides to the ends of RNA molecules by using nucleoside diphosphates as substrates, but this may not be physiologically important. Probably plays a role in initiation of 16S rRNA degradation (leading to ribosome degradation) during starvation. This Allorhizobium ampelinum (strain ATCC BAA-846 / DSM 112012 / S4) (Agrobacterium vitis (strain S4)) protein is Ribonuclease PH.